The primary structure comprises 171 residues: Peptide methionine sulfoxide reductase MsrA (171 aa).

Cysteine 13 is a catalytic residue.

It belongs to the MsrA Met sulfoxide reductase family.

The catalysed reaction is L-methionyl-[protein] + [thioredoxin]-disulfide + H2O = L-methionyl-(S)-S-oxide-[protein] + [thioredoxin]-dithiol. It carries out the reaction [thioredoxin]-disulfide + L-methionine + H2O = L-methionine (S)-S-oxide + [thioredoxin]-dithiol. Has an important function as a repair enzyme for proteins that have been inactivated by oxidation. Catalyzes the reversible oxidation-reduction of methionine sulfoxide in proteins to methionine. The protein is Peptide methionine sulfoxide reductase MsrA of Mycolicibacterium paratuberculosis (strain ATCC BAA-968 / K-10) (Mycobacterium paratuberculosis).